We begin with the raw amino-acid sequence, 571 residues long: Urease subunit alpha (571 aa).

The Urease domain occupies 133–571 (GGVDSHIHFI…LPLAQRYFLF (439 aa)). Ni(2+) contacts are provided by His138, His140, and Lys221. Lys221 is modified (N6-carboxylysine). Residue His223 coordinates substrate. Residues His250 and His276 each contribute to the Ni(2+) site. His324 acts as the Proton donor in catalysis. Asp364 contributes to the Ni(2+) binding site.

Belongs to the metallo-dependent hydrolases superfamily. Urease alpha subunit family. As to quaternary structure, heterotrimer of UreA (gamma), UreB (beta) and UreC (alpha) subunits. Three heterotrimers associate to form the active enzyme. Ni cation serves as cofactor. Carboxylation allows a single lysine to coordinate two nickel ions.

Its subcellular location is the cytoplasm. The catalysed reaction is urea + 2 H2O + H(+) = hydrogencarbonate + 2 NH4(+). The protein operates within nitrogen metabolism; urea degradation; CO(2) and NH(3) from urea (urease route): step 1/1. The protein is Urease subunit alpha of Anaeromyxobacter sp. (strain Fw109-5).